We begin with the raw amino-acid sequence, 484 residues long: Serine/threonine-protein kinase RIO1 (484 aa).

Residues Ala76 to Ser402 form the Protein kinase domain. The ATP site is built by Lys125 and Leu198. Asp244 serves as the catalytic Proton acceptor. Asn249 and Asp261 together coordinate Mg(2+). Asp261 (4-aspartylphosphate intermediate) is an active-site residue. Residues Asp398–Lys484 form a disordered region. Phosphoserine; by CK2 is present on residues Ser402, Ser403, Ser409, Ser416, Ser417, and Ser419. The tract at residues Ser403 to Lys484 is interaction with CKA2. Positions Glu407–Glu434 are enriched in acidic residues. The association with (pre-)40S ribosomal subunit stretch occupies residues Gly440 to Lys484. The span at Lys442–Arg461 shows a compositional bias: basic and acidic residues. Positions Glu462–Lys484 are enriched in basic residues.

Belongs to the protein kinase superfamily. RIO-type Ser/Thr kinase family. Interacts with CKA2. Mg(2+) is required as a cofactor. Post-translationally, autophosphorylated. Phosphorylated by casein kinase II (CK2). Phosphorylation by CK2 stimulates RIO1 kinase activity and targets it for degradation at the G1/S transition of the cell cycle.

It localises to the cytoplasm. It carries out the reaction L-seryl-[protein] + ATP = O-phospho-L-seryl-[protein] + ADP + H(+). The enzyme catalyses L-threonyl-[protein] + ATP = O-phospho-L-threonyl-[protein] + ADP + H(+). The catalysed reaction is ATP + H2O = ADP + phosphate + H(+). Required for the final endonucleolytic cleavage at site D converting 20S pre-rRNA into the mature 18S rRNA. Required for the final steps of cytoplasmic maturation of the 40S ribosomal subunit. The association with the very late 40S subunit intermediate seems to follow RIO2 association with precursors of the 40S subunit and may involve a translation-like checkpoint point cycle preceeding the binding to the 60S ribosomal subunit. Despite the protein kinase domain is proposed to act predominantly as an ATPase. The catalytic activity regulates its dynamic association with the 40S subunit. Has a role in the cell cycle where it is required for entrance into S-phase and in the control of the onset of anaphase. Appears to also be involved in the maintenance of chromosome stability and correct mitotic segregation. The protein is Serine/threonine-protein kinase RIO1 (RIO1) of Saccharomyces cerevisiae (strain ATCC 204508 / S288c) (Baker's yeast).